The chain runs to 191 residues: Adenylate kinase (191 aa).

11-16 (GAGKGT) is a binding site for ATP. The NMP stretch occupies residues 31-60 (STGDILRSNVAERSPLGIKAKDYMDKGDLV). AMP-binding positions include threonine 32, arginine 37, 58-60 (DLV), 86-89 (GFPR), and glutamine 93. Residues 132–138 (SRKREDD) are LID. Residue arginine 133 participates in ATP binding. 2 residues coordinate AMP: arginine 135 and arginine 146. Asparagine 174 is a binding site for ATP.

This sequence belongs to the adenylate kinase family. Monomer.

It is found in the cytoplasm. It carries out the reaction AMP + ATP = 2 ADP. It functions in the pathway purine metabolism; AMP biosynthesis via salvage pathway; AMP from ADP: step 1/1. In terms of biological role, catalyzes the reversible transfer of the terminal phosphate group between ATP and AMP. Plays an important role in cellular energy homeostasis and in adenine nucleotide metabolism. In Trichodesmium erythraeum (strain IMS101), this protein is Adenylate kinase.